Here is a 354-residue protein sequence, read N- to C-terminus: Myosin-binding protein H-like (354 aa).

The segment at 1-47 (MEAATAPEVAAGSKLKVKEASPADAEPPQASPGQGAGSPTPQLLPPI) is disordered. A Phosphoserine modification is found at S38. The 95-residue stretch at 45 to 139 (PPIEEHPKIW…GGLEATATID (95 aa)) folds into the Ig-like C2-type 1 domain. Residues 148-238 (PPQSIKLVDV…ETAPITTDLA (91 aa)) enclose the Fibronectin type-III domain. The 85-residue stretch at 261–345 (PKFTQPLADC…VNPLGEASVD (85 aa)) folds into the Ig-like C2-type 2 domain. The cysteines at positions 282 and 333 are disulfide-linked. R321 carries the post-translational modification Omega-N-methylarginine.

It belongs to the immunoglobulin superfamily. MyBP family. As to expression, expressed in heart, with higher expression in the atria. In terms of tissue distribution, expressed in left atrium and ventricle, arteria mammaria interna and skeletal muscle. Expressed specifically en the left atrium.

It is found in the cytoplasm. It localises to the myofibril. Its subcellular location is the sarcomere. Its function is as follows. Myosin-binding protein which plays a role in cardiac function. Seems to regulate conduction in the atria and ventricular conduction systems. This chain is Myosin-binding protein H-like, found in Homo sapiens (Human).